A 387-amino-acid polypeptide reads, in one-letter code: Hydroxycarboxylic acid receptor 3 (387 aa).

The Extracellular segment spans residues 1–28 (MNRHHLQDHFLEIDKKNCCVFRDDFIAK). Residues 29 to 50 (VLPPVLGLEFIFGLLGNGLALW) traverse the membrane as a helical segment. Topologically, residues 51-63 (IFCFHLKSWKSSR) are cytoplasmic. Residues 64–85 (IFLFNLAVADFLLIICLPFVMD) form a helical membrane-spanning segment. The Extracellular segment spans residues 86–102 (YYVRRSDWKFGDIPCRL). A disulfide bond links C100 and C177. The helical transmembrane segment at 103-123 (VLFMFAMNRQGSIIFLTVVAV) threads the bilayer. The Cytoplasmic segment spans residues 124 to 142 (DRYFRVVHPHHALNKISNW). Residues 143 to 163 (TAAIISCLLWGITVGLTVHLL) form a helical membrane-spanning segment. Residues 164–194 (KKKLLIQNGTANVCISFSICHTFRWHEAMFL) lie on the Extracellular side of the membrane. The helical transmembrane segment at 195–209 (LEFFLPLGIILFCSA) threads the bilayer. The Cytoplasmic portion of the chain corresponds to 210 to 236 (RIIWSLRQRQMDRHAKIKRAITFIMVV). The helical transmembrane segment at 237-256 (AIVFVICFLPSVVVRIHIFW) threads the bilayer. Residues 257 to 273 (LLHTSGTQNCEVYRSVD) are Extracellular-facing. Residues 274 to 298 (LAFFITLSFTYMNSMLDPVVYYFSS) traverse the membrane as a helical segment. The Cytoplasmic segment spans residues 299–387 (PSFPNFFSTL…LEKQLGCCIE (89 aa)). Positions 319–343 (GEPDNNRSTSVELTGDPNKTRGAPE) are disordered.

Belongs to the G-protein coupled receptor 1 family. In terms of tissue distribution, expression largely restricted to adipose tissue and spleen.

It localises to the cell membrane. Its function is as follows. Receptor for 3-OH-octanoid acid mediates a negative feedback regulation of adipocyte lipolysis to counteract prolipolytic influences under conditions of physiological or pathological increases in beta-oxidation rates. Acts as a low affinity receptor for nicotinic acid. This pharmacological effect requires nicotinic acid doses that are much higher than those provided by a normal diet. In Homo sapiens (Human), this protein is Hydroxycarboxylic acid receptor 3 (HCAR3).